A 238-amino-acid polypeptide reads, in one-letter code: Uridylate kinase (238 aa).

An ATP-binding site is contributed by Lys-10–Gly-13. The segment at Gly-18–Gly-23 is involved in allosteric activation by GTP. Gly-52 contributes to the UMP binding site. The ATP site is built by Gly-53 and Arg-57. UMP is bound by residues Asp-73 and Thr-134 to Thr-141. ATP-binding residues include Thr-161, Tyr-167, and Asp-170.

The protein belongs to the UMP kinase family. As to quaternary structure, homohexamer.

The protein resides in the cytoplasm. It catalyses the reaction UMP + ATP = UDP + ADP. The protein operates within pyrimidine metabolism; CTP biosynthesis via de novo pathway; UDP from UMP (UMPK route): step 1/1. Its activity is regulated as follows. Allosterically activated by GTP. Inhibited by UTP. In terms of biological role, catalyzes the reversible phosphorylation of UMP to UDP. The sequence is that of Uridylate kinase from Campylobacter concisus (strain 13826).